The chain runs to 450 residues: Phosphoglucosamine mutase (450 aa).

Ser103 functions as the Phosphoserine intermediate in the catalytic mechanism. Residues Ser103, Asp243, Asp245, and Asp247 each contribute to the Mg(2+) site. Ser103 bears the Phosphoserine mark.

Belongs to the phosphohexose mutase family. The cofactor is Mg(2+). Activated by phosphorylation.

The catalysed reaction is alpha-D-glucosamine 1-phosphate = D-glucosamine 6-phosphate. Catalyzes the conversion of glucosamine-6-phosphate to glucosamine-1-phosphate. In Lactobacillus helveticus (strain DPC 4571), this protein is Phosphoglucosamine mutase.